The chain runs to 504 residues: L-carnitine/gamma-butyrobetaine antiporter (504 aa).

12 consecutive transmembrane segments (helical) span residues 10-30 (IEPKVFFPPLIIVGILCWLTV), 51-71 (WGWAFEWYMVVMLFGWFWLVF), 92-112 (IFMMFASCTSAAVLFWGSIEI), 143-163 (GPLPWATYSFLSVAFAYFFFV), 195-215 (FYLVALIFAMGTSLGLATPLV), 231-251 (LDAIIITCWIILNAICVACGL), 263-283 (SYLSFLMLGWVFIVSGASFIM), 316-336 (WTVFYWAWWVIYAIQMSIFLA), 347-367 (LCFGMVLGLTASTWILWTVLG), 398-418 (WAALPLSTATMWGFFILCFIA), 446-466 (LLVRIGWSILVGIIGIVLLAL), and 475-495 (AIIAGGCPLFFVNIMVTLSFI).

The protein belongs to the BCCT transporter (TC 2.A.15) family. CaiT subfamily. Homotrimer.

The protein localises to the cell inner membrane. It catalyses the reaction 4-(trimethylamino)butanoate(in) + (R)-carnitine(out) = 4-(trimethylamino)butanoate(out) + (R)-carnitine(in). It participates in amine and polyamine metabolism; carnitine metabolism. In terms of biological role, catalyzes the exchange of L-carnitine for gamma-butyrobetaine. In Escherichia coli (strain ATCC 8739 / DSM 1576 / NBRC 3972 / NCIMB 8545 / WDCM 00012 / Crooks), this protein is L-carnitine/gamma-butyrobetaine antiporter.